Reading from the N-terminus, the 277-residue chain is Acetyl-coenzyme A carboxylase carboxyl transferase subunit beta (277 aa).

The region spanning 22-277 (LWTKCPGCNR…TLKQLLYFLT (256 aa)) is the CoA carboxyltransferase N-terminal domain. Zn(2+) is bound by residues Cys-26, Cys-29, Cys-45, and Cys-48. Residues 26–48 (CPGCNRFLYTKELELNQSVCHYC) form a C4-type zinc finger.

The protein belongs to the AccD/PCCB family. In terms of assembly, acetyl-CoA carboxylase is a heterohexamer composed of biotin carboxyl carrier protein (AccB), biotin carboxylase (AccC) and two subunits each of ACCase subunit alpha (AccA) and ACCase subunit beta (AccD). Requires Zn(2+) as cofactor.

It is found in the cytoplasm. It catalyses the reaction N(6)-carboxybiotinyl-L-lysyl-[protein] + acetyl-CoA = N(6)-biotinyl-L-lysyl-[protein] + malonyl-CoA. Its pathway is lipid metabolism; malonyl-CoA biosynthesis; malonyl-CoA from acetyl-CoA: step 1/1. Its function is as follows. Component of the acetyl coenzyme A carboxylase (ACC) complex. Biotin carboxylase (BC) catalyzes the carboxylation of biotin on its carrier protein (BCCP) and then the CO(2) group is transferred by the transcarboxylase to acetyl-CoA to form malonyl-CoA. The protein is Acetyl-coenzyme A carboxylase carboxyl transferase subunit beta of Methylacidiphilum infernorum (isolate V4) (Methylokorus infernorum (strain V4)).